The primary structure comprises 190 residues: Nuclear transcription factor Y subunit B-2 (190 aa).

A disordered region spans residues 1-30 (MGDSDRDSGGGQNGNNQNGQSSLSPREQDR). The DNA-binding element occupies 32–38 (LPIANVS). A subunit association domain (SAD) region spans residues 59–70 (MQECVSEFISFV). Positions 168-190 (HMYGATGGGSDSGGGAASGRTRT) are disordered. The segment covering 172-184 (ATGGGSDSGGGAA) has biased composition (gly residues).

It belongs to the NFYB/HAP3 subunit family. As to quaternary structure, heterotrimeric transcription factor composed of three components, NF-YA, NF-YB and NF-YC. NF-YB and NF-YC must interact and dimerize for NF-YA association and DNA binding. Binds directly with DPB3-1. Ubiquitous. Predominantly expressed in flowers and siliques.

Its subcellular location is the nucleus. Its function is as follows. Component of the NF-Y/HAP transcription factor complex. The NF-Y complex stimulates the transcription of various genes by recognizing and binding to a CCAAT motif in promoters. In Arabidopsis thaliana (Mouse-ear cress), this protein is Nuclear transcription factor Y subunit B-2.